Reading from the N-terminus, the 240-residue chain is 7-cyano-7-deazaguanine synthase (240 aa).

18–28 (FSGGQDSTTCL) contributes to the ATP binding site. Zn(2+)-binding residues include Cys197, Cys206, Cys209, and Cys212.

The protein belongs to the QueC family. Requires Zn(2+) as cofactor.

It carries out the reaction 7-carboxy-7-deazaguanine + NH4(+) + ATP = 7-cyano-7-deazaguanine + ADP + phosphate + H2O + H(+). It functions in the pathway purine metabolism; 7-cyano-7-deazaguanine biosynthesis. In terms of biological role, catalyzes the ATP-dependent conversion of 7-carboxy-7-deazaguanine (CDG) to 7-cyano-7-deazaguanine (preQ(0)). In Shewanella baltica (strain OS223), this protein is 7-cyano-7-deazaguanine synthase.